The chain runs to 86 residues: UPF0457 protein SAUSA300_2132 (86 aa).

The protein belongs to the UPF0457 family.

The sequence is that of UPF0457 protein SAUSA300_2132 from Staphylococcus aureus (strain USA300).